Here is a 476-residue protein sequence, read N- to C-terminus: Acidic leucine-rich nuclear phosphoprotein 32-related protein 1 (476 aa).

LRR repeat units lie at residues Ser51 to Arg72, Asn73 to Val92, and Ser98 to Ala119. In terms of domain architecture, LRRCT spans Cys131–Asp169. The disordered stretch occupies residues Asp157–His476. Composition is skewed to acidic residues over residues Glu165–Gly194, Asp222–Glu232, Gly252–Val289, Ser299–Pro329, Glu353–Leu371, Glu379–Glu396, Asp415–Gly436, and Gly458–Val467.

It belongs to the ANP32 family.

The sequence is that of Acidic leucine-rich nuclear phosphoprotein 32-related protein 1 from Oryza sativa subsp. japonica (Rice).